Here is a 440-residue protein sequence, read N- to C-terminus: Replication factor C large subunit (440 aa).

48-55 provides a ligand contact to ATP; the sequence is GPPGVGKT.

The protein belongs to the activator 1 small subunits family. RfcL subfamily. In terms of assembly, heteromultimer composed of small subunits (RfcS) and large subunits (RfcL).

Part of the RFC clamp loader complex which loads the PCNA sliding clamp onto DNA. The polypeptide is Replication factor C large subunit (Sulfurisphaera tokodaii (strain DSM 16993 / JCM 10545 / NBRC 100140 / 7) (Sulfolobus tokodaii)).